A 180-amino-acid chain; its full sequence is tRNA (cytidine(56)-2'-O)-methyltransferase (180 aa).

Leu85 provides a ligand contact to S-adenosyl-L-methionine.

Belongs to the aTrm56 family. In terms of assembly, homodimer.

The protein localises to the cytoplasm. The enzyme catalyses cytidine(56) in tRNA + S-adenosyl-L-methionine = 2'-O-methylcytidine(56) in tRNA + S-adenosyl-L-homocysteine + H(+). Specifically catalyzes the AdoMet-dependent 2'-O-ribose methylation of cytidine at position 56 in tRNAs. This Methanobrevibacter smithii (strain ATCC 35061 / DSM 861 / OCM 144 / PS) protein is tRNA (cytidine(56)-2'-O)-methyltransferase.